Consider the following 377-residue polypeptide: Probable staphylococcal-like nuclease CAN3 (377 aa).

Residue Gly-2 is the site of N-myristoyl glycine attachment. Residue Cys-7 is the site of S-palmitoyl cysteine attachment. A disordered region spans residues 15–57 (GDHYPYYKPTSRPHYQPPHYHGQPAAPPAPPQQQPLGPHGVTP). The segment covering 27-38 (PHYQPPHYHGQP) has biased composition (low complexity). Residues 177-353 (NTLPVYDKCI…KAANRGLWAS (177 aa)) enclose the TNase-like domain. Position 190 (Asp-190) interacts with Ca(2+). The active site involves Arg-260. Ca(2+) is bound at residue Asp-265. Residues Glu-268 and Arg-302 contribute to the active site.

The protein belongs to the thermonuclease family. The cofactor is Ca(2+).

The protein resides in the cell membrane. Functionally, enzyme that catalyzes the hydrolysis of both DNA and RNA at the 5' position of the phosphodiester bond. This Oryza sativa subsp. japonica (Rice) protein is Probable staphylococcal-like nuclease CAN3.